A 359-amino-acid chain; its full sequence is Isopentenyl-diphosphate delta-isomerase (359 aa).

Arg-12 to Lys-13 serves as a coordination point for substrate. FMN contacts are provided by residues Ser-68, Ala-69–Thr-71, Ser-99, and Asn-128. A substrate-binding site is contributed by Ser-99 to Arg-101. Gln-162 provides a ligand contact to substrate. Glu-163 lines the Mg(2+) pocket. FMN contacts are provided by residues Lys-194, Thr-224, Gly-277–Arg-279, and Ala-298–Leu-299.

This sequence belongs to the IPP isomerase type 2 family. Homooctamer. Dimer of tetramers. It depends on FMN as a cofactor. The cofactor is NADPH. Mg(2+) serves as cofactor.

It is found in the cytoplasm. The catalysed reaction is isopentenyl diphosphate = dimethylallyl diphosphate. Involved in the biosynthesis of isoprenoids. Catalyzes the 1,3-allylic rearrangement of the homoallylic substrate isopentenyl (IPP) to its allylic isomer, dimethylallyl diphosphate (DMAPP). The chain is Isopentenyl-diphosphate delta-isomerase from Methanoregula boonei (strain DSM 21154 / JCM 14090 / 6A8).